Consider the following 150-residue polypeptide: Cilia- and flagella-associated protein 68 (150 aa).

Mn stretches follow at residues 99-110 and 140-150; these read TTYDTSYNNKMP and KSTYMNSYSKP.

The protein belongs to the CFAP68 family. In terms of assembly, microtubule inner protein component of sperm flagellar doublet microtubules.

It localises to the cytoplasm. The protein resides in the cytoskeleton. It is found in the cilium axoneme. Its subcellular location is the flagellum axoneme. The protein localises to the nucleus. It localises to the cell projection. The protein resides in the cilium. In terms of biological role, microtubule inner protein (MIP) part of the dynein-decorated doublet microtubules (DMTs) in cilia axoneme, which is required for motile cilia beating. This is Cilia- and flagella-associated protein 68 from Homo sapiens (Human).